A 484-amino-acid polypeptide reads, in one-letter code: Probable receptor-like protein kinase At5g18500 (484 aa).

Residues 21 to 41 form a helical membrane-spanning segment; it reads IIVIVLSAIFVVVLAISLWLT. The interval 72–135 is disordered; it reads RVDEVSSSNG…SVSSANPLTA (64 aa). Residues 91–105 are compositionally biased toward basic and acidic residues; the sequence is KFGDKEPEKGIKAES. Polar residues predominate over residues 125–134; it reads SSVSSANPLT. T155 is subject to Phosphothreonine. The 280-residue stretch at 166 to 445 folds into the Protein kinase domain; the sequence is FSRDNIIGDG…MLESEEYPIA (280 aa). Residues 172–180 and K194 contribute to the ATP site; that span reads IGDGGYGVV. Phosphotyrosine is present on Y239. D292 (proton acceptor) is an active-site residue. S296 carries the phosphoserine modification. T326 and T331 each carry phosphothreonine. A Phosphotyrosine modification is found at Y339. Residues 425-484 form a disordered region; sequence EKRPRMSQVARMLESEEYPIAREDRRRRRSQNGTTRDSDPPRNSTDTDKSEYHDLKPEGG. The span at 460-484 shows a compositional bias: basic and acidic residues; the sequence is RDSDPPRNSTDTDKSEYHDLKPEGG.

This sequence belongs to the protein kinase superfamily. Ser/Thr protein kinase family.

It localises to the cell membrane. It catalyses the reaction L-seryl-[protein] + ATP = O-phospho-L-seryl-[protein] + ADP + H(+). The catalysed reaction is L-threonyl-[protein] + ATP = O-phospho-L-threonyl-[protein] + ADP + H(+). The chain is Probable receptor-like protein kinase At5g18500 from Arabidopsis thaliana (Mouse-ear cress).